The sequence spans 1030 residues: Zinc finger and SCAN domain-containing protein 20 (1030 aa).

Residues 22 to 42 (DSWGSDSRPEKESHSPVPGPE) form a disordered region. The SCAN box domain occupies 45-127 (RRCFRQFRYR…ALVEDWHREA (83 aa)). Disordered stretches follow at residues 178 to 201 (DLSK…PTVP), 213 to 285 (GKSQ…DSAQ), 411 to 441 (SGGP…WEPE), and 578 to 600 (TGLP…GEME). Over residues 225-240 (AKKEPCQDPAGGDRGD) the composition is skewed to basic and acidic residues. 2 stretches are compositionally biased toward acidic residues: residues 426–441 (SDTE…WEPE) and 589–600 (EADDQEAWGEME). The segment at 697-719 (YGCDTRAKSFSRKVHFFAPQRTH) adopts a C2H2-type 1; degenerate zinc-finger fold. The C2H2-type 2; degenerate zinc-finger motif lies at 725–747 (YKCLGSGKSFSDRANLSTHQRIH). 2 consecutive C2H2-type zinc fingers follow at residues 753–775 (YRCL…QRTH) and 781–803 (YKCG…QRVH). Disordered stretches follow at residues 801 to 820 (RVHL…NFGQ) and 828 to 850 (WRRN…ADSP). C2H2-type zinc fingers lie at residues 862–884 (YSCP…QRIH), 890–912 (YECA…RRTH), 918–940 (HKCA…QRVH), 946–968 (YECP…QRIH), 974–996 (YKCR…QRIH), and 1002–1024 (YKCT…RRTH).

It belongs to the krueppel C2H2-type zinc-finger protein family.

It localises to the nucleus. Its function is as follows. May be involved in transcriptional regulation. This Mus musculus (Mouse) protein is Zinc finger and SCAN domain-containing protein 20 (Zscan20).